Consider the following 103-residue polypeptide: Nucleoid-associated protein SUN_2278 (103 aa).

The protein belongs to the YbaB/EbfC family. As to quaternary structure, homodimer.

The protein resides in the cytoplasm. It localises to the nucleoid. In terms of biological role, binds to DNA and alters its conformation. May be involved in regulation of gene expression, nucleoid organization and DNA protection. In Sulfurovum sp. (strain NBC37-1), this protein is Nucleoid-associated protein SUN_2278.